The primary structure comprises 358 residues: Zinc transporter ZIP1 (358 aa).

Residues 1–7 lie on the Extracellular side of the membrane; that stretch reads MDLLFAK. Residues 8-28 form a helical membrane-spanning segment; the sequence is IICIGIFLVVTTFGCFIPHLM. At 29-53 the chain is on the cytoplasmic side; the sequence is GLYKEKENEEKNKRVKNILSNLNCF. A helical transmembrane segment spans residues 54–74; the sequence is GSGFIFSIIMFHLLPETIHII. The Extracellular segment spans residues 75 to 91; the sequence is SDHGNIRIFNTSDSQMK. Residues 92 to 112 traverse the membrane as a helical segment; the sequence is ILYIFFFVFIGFCMQLGLEYV. Topologically, residues 113–186 are cytoplasmic; it reads LPVDTNICCV…GKFLEILTLQ (74 aa). Residues 187 to 207 traverse the membrane as a helical segment; it reads SFFLTISLAIHSCIEGMIIGT. Residues 208–213 are Extracellular-facing; that stretch reads STDVNY. A helical membrane pass occupies residues 214–234; sequence VFISSFCILLHKWIAGVTVSL. The Cytoplasmic portion of the chain corresponds to 235-246; sequence SLNSNNMNKTLK. A helical transmembrane segment spans residues 247 to 267; sequence AILLLTFVFASPLGIVLGHMA. Over 268 to 273 the chain is Extracellular; sequence KSAGQK. The chain crosses the membrane as a helical span at residues 274–294; sequence VTCLINAVSIGTLLFIGCEIL. Topologically, residues 295–310 are cytoplasmic; sequence LNEIKQNISRKVRLCK. Residues 311–331 form a helical membrane-spanning segment; that stretch reads WLSFCFSCLIAFALISFTTSM. The Extracellular segment spans residues 332-358; sequence APHTHGDIDTHVHVHHHDHDHDHGHNH.

It belongs to the ZIP transporter (TC 2.A.5) family. In terms of assembly, homodimer.

It localises to the plastid. The protein resides in the apicoplast. The protein localises to the cell membrane. The catalysed reaction is Zn(2+)(in) = Zn(2+)(out). It carries out the reaction Fe(2+)(in) = Fe(2+)(out). Functionally, transporter for the divalent zinc cation. Mediates the influx of zinc into cells from extracellular space. Can transport divalent iron ions. Does not transport manganese and cadmium cations. The polypeptide is Zinc transporter ZIP1 (Plasmodium falciparum (isolate 3D7)).